Reading from the N-terminus, the 516-residue chain is Glucose-6-phosphate 1-dehydrogenase 5, cytoplasmic (516 aa).

Residues 38 to 45 (GASGDLAK), Arg73, Tyr156, and Lys183 contribute to the NADP(+) site. Residues Lys183, 213–217 (HYLGK), Glu251, and Asp270 each bind D-glucose 6-phosphate. The Proton acceptor role is filled by His275. Residue Lys358 coordinates NADP(+). D-glucose 6-phosphate is bound by residues Lys361 and Lys366. NADP(+) contacts are provided by Lys367, Arg371, and Arg395. Gln397 serves as a coordination point for D-glucose 6-phosphate. Residues 403-405 (YMK), 423-425 (DLS), Arg489, and Trp511 contribute to the NADP(+) site.

The protein belongs to the glucose-6-phosphate dehydrogenase family. Forms homodimer. As to expression, expressed in leaves and stems.

The protein resides in the cytoplasm. The protein localises to the cytosol. The catalysed reaction is D-glucose 6-phosphate + NADP(+) = 6-phospho-D-glucono-1,5-lactone + NADPH + H(+). It participates in carbohydrate degradation; pentose phosphate pathway; D-ribulose 5-phosphate from D-glucose 6-phosphate (oxidative stage): step 1/3. Regulated by metabolites. Catalyzes the rate-limiting step of the oxidative pentose-phosphate pathway, which represents a route for the dissimilation of carbohydrates besides glycolysis. The main function of this enzyme is to provide reducing power (NADPH) and pentose phosphates for fatty acid and nucleic acid synthesis which are involved in membrane synthesis and cell division. In Arabidopsis thaliana (Mouse-ear cress), this protein is Glucose-6-phosphate 1-dehydrogenase 5, cytoplasmic.